Reading from the N-terminus, the 714-residue chain is Rho-GTPase-activating protein RGD2 (714 aa).

Positions 2–441 constitute an F-BAR domain; that stretch reads LSFCDYFWSE…LENDIDPTAD (440 aa). One can recognise a DEP domain in the interval 218 to 298; sequence PKTDYKLPLI…WKNTAYMFAN (81 aa). Residues 475 to 704 enclose the Rho-GAP domain; sequence VDLETRCRLD…DLLTHKKQIF (230 aa).

As to quaternary structure, interacts with CDC42 and RHO5.

Acts in signal transduction. Activates CDC42 and RHO5. The polypeptide is Rho-GTPase-activating protein RGD2 (RGD2) (Saccharomyces cerevisiae (strain ATCC 204508 / S288c) (Baker's yeast)).